A 618-amino-acid chain; its full sequence is Camphene synthase, chloroplastic (618 aa).

A chloroplast-targeting transit peptide spans 1–51; it reads MALLSITPLVSRSCLSSSHEIKALRRTIPTLGICRPGKSVAHSINMCLTSV. The Mg(2+) site is built by Asp-369, Asp-373, and Asp-521. The DDXXD motif motif lies at 369-373; that stretch reads DDMYD.

It belongs to the terpene synthase family. Tpsd subfamily. Mg(2+) serves as cofactor. Mn(2+) is required as a cofactor. It depends on K(+) as a cofactor.

The protein localises to the plastid. Its subcellular location is the chloroplast. It carries out the reaction (2E)-geranyl diphosphate = (1S,4R)-camphene + diphosphate. It participates in terpene metabolism; oleoresin biosynthesis. Its function is as follows. Involved in defensive oleoresin formation in conifers in response to insect attack or other injury. Involved in monoterpene (C10) olefins biosynthesis. This Abies grandis (Grand fir) protein is Camphene synthase, chloroplastic (ag6).